Consider the following 198-residue polypeptide: Holliday junction branch migration complex subunit RuvA (198 aa).

Positions 1–63 (MYDYIKGQLT…EDAHLLFGFH (63 aa)) are domain I. The domain II stretch occupies residues 64 to 142 (TEDEKDVFLK…EAPQETGNTK (79 aa)). Residues 143–147 (ARSNK) are flexible linker. The tract at residues 148–198 (AGNTQLDEAIEALLALGYKAAELKKIRAFFEGTSETAEQYIKSALKLLMKG) is domain III.

Belongs to the RuvA family. Homotetramer. Forms an RuvA(8)-RuvB(12)-Holliday junction (HJ) complex. HJ DNA is sandwiched between 2 RuvA tetramers; dsDNA enters through RuvA and exits via RuvB. An RuvB hexamer assembles on each DNA strand where it exits the tetramer. Each RuvB hexamer is contacted by two RuvA subunits (via domain III) on 2 adjacent RuvB subunits; this complex drives branch migration. In the full resolvosome a probable DNA-RuvA(4)-RuvB(12)-RuvC(2) complex forms which resolves the HJ.

It localises to the cytoplasm. Functionally, the RuvA-RuvB-RuvC complex processes Holliday junction (HJ) DNA during genetic recombination and DNA repair, while the RuvA-RuvB complex plays an important role in the rescue of blocked DNA replication forks via replication fork reversal (RFR). RuvA specifically binds to HJ cruciform DNA, conferring on it an open structure. The RuvB hexamer acts as an ATP-dependent pump, pulling dsDNA into and through the RuvAB complex. HJ branch migration allows RuvC to scan DNA until it finds its consensus sequence, where it cleaves and resolves the cruciform DNA. The polypeptide is Holliday junction branch migration complex subunit RuvA (Streptococcus pyogenes serotype M28 (strain MGAS6180)).